The sequence spans 501 residues: Rhazimal synthase (501 aa).

The helical transmembrane segment at 4–24 threads the bilayer; the sequence is MQLSFASAVVYSLIFFVFLLV. A glycan (N-linked (GlcNAc...) asparagine) is linked at asparagine 282. Cysteine 442 is a heme binding site.

The protein belongs to the cytochrome P450 family. The cofactor is heme.

It localises to the membrane. The catalysed reaction is (19E)-geissoschizine + reduced [NADPH--hemoprotein reductase] + O2 = rhazimal + oxidized [NADPH--hemoprotein reductase] + 2 H2O + H(+). The enzyme catalyses (19E)-geissoschizine + reduced [NADPH--hemoprotein reductase] + O2 = akuammicine + formate + oxidized [NADPH--hemoprotein reductase] + H2O + H(+). It functions in the pathway alkaloid biosynthesis. In terms of biological role, a cytochrome P450 monooxygenase involved in the biosynthesis of akuammilan monoterpene indole alkaloids (MIAs) natural products, components with various biological properties such as antidiabetic, antibacterial, anti-inflammatory, anticancer, and antimalarial activities. Catalyzes the conversion of geissoschizine to rhazimal. Can also, with lower efficiency, support the conversion of geissoschizine to akuammicine. This is Rhazimal synthase from Alstonia scholaris (Dogbane).